A 398-amino-acid polypeptide reads, in one-letter code: NADH-quinone oxidoreductase subunit D (398 aa).

The protein belongs to the complex I 49 kDa subunit family. In terms of assembly, NDH-1 is composed of 14 different subunits. Subunits NuoB, C, D, E, F, and G constitute the peripheral sector of the complex.

The protein resides in the cell inner membrane. It carries out the reaction a quinone + NADH + 5 H(+)(in) = a quinol + NAD(+) + 4 H(+)(out). In terms of biological role, NDH-1 shuttles electrons from NADH, via FMN and iron-sulfur (Fe-S) centers, to quinones in the respiratory chain. The immediate electron acceptor for the enzyme in this species is believed to be ubiquinone. Couples the redox reaction to proton translocation (for every two electrons transferred, four hydrogen ions are translocated across the cytoplasmic membrane), and thus conserves the redox energy in a proton gradient. The chain is NADH-quinone oxidoreductase subunit D from Caulobacter vibrioides (strain ATCC 19089 / CIP 103742 / CB 15) (Caulobacter crescentus).